Reading from the N-terminus, the 249-residue chain is MQGILAEIELDFPPLQIQEKIATILDTFTELSAELRERKKQYAFYRDYLLNQENIRKIYGANIPFETFQVKDICEIRRGRAITKAYIRNNPGENPVYSAATTNDGELGRIKDCDFDGEYITWTTNGYAGVVFYRNGKFNASQDCGVLKVKNKKICTKFLSFLLKIEAPKFVHNLASRPKLSQKVMAEIELSFPPLEIQEKIADILFAFEKLCNDLVEGIPAEIEMRKKQLDYYYHLIFSKIAHFSKQLA.

The protein belongs to the type-I restriction system S methylase family. The methyltransferase is composed of M and S polypeptides.

Functionally, the specificity (S) subunit of a type I methyltransferase (MTase); this subunit dictates DNA sequence specificity. The single R subunit has multiple frameshifts and is probably not expressed. The chain is Putative type I specificity subunit S.MpnORF615P from Mycoplasma pneumoniae (strain ATCC 29342 / M129 / Subtype 1) (Mycoplasmoides pneumoniae).